A 2325-amino-acid chain; its full sequence is Protein Ycf2 (2325 aa).

Disordered regions lie at residues 168-189 (SSQL…GTED), 221-251 (TEIE…EMNN), and 947-1006 (KRKK…KRKE). Over residues 230-240 (KGLSGSSSKSR) the composition is skewed to low complexity. Composition is skewed to basic and acidic residues over residues 241 to 250 (LFTEGEKEMN) and 955 to 1004 (KRKE…PEKR). 1436–1443 (GSIGSGRS) lines the ATP pocket. Disordered stretches follow at residues 1510-1529 (YEDR…DYEP), 1855-1996 (LVGS…LLRP), and 2063-2179 (PAEE…DGFS). The segment covering 1861-1976 (TEEEVEGTEE…VEGTEDEEGE (116 aa)) has biased composition (acidic residues). Over residues 1977–1989 (GTEKDSSQFDNDR) the composition is skewed to basic and acidic residues. 2 stretches are compositionally biased toward acidic residues: residues 2063 to 2080 (PAEE…EALE) and 2087 to 2162 (GEEE…ENDS).

Belongs to the Ycf2 family.

Its subcellular location is the plastid. It localises to the chloroplast stroma. In terms of biological role, probable ATPase of unknown function. Its presence in a non-photosynthetic plant (Epifagus virginiana) and experiments in tobacco indicate that it has an essential function which is probably not related to photosynthesis. The polypeptide is Protein Ycf2 (Oenothera biennis (German evening primrose)).